The primary structure comprises 441 residues: Ribulose bisphosphate carboxylase large chain (441 aa).

The residue at position 5 (Lys5) is an N6,N6,N6-trimethyllysine. Substrate contacts are provided by Asn114 and Thr164. Lys166 serves as the catalytic Proton acceptor. Lys168 serves as a coordination point for substrate. The Mg(2+) site is built by Lys192, Asp194, and Glu195. At Lys192 the chain carries N6-carboxylysine. His285 (proton acceptor) is an active-site residue. The substrate site is built by Arg286, His318, and Ser370.

The protein belongs to the RuBisCO large chain family. Type I subfamily. Heterohexadecamer of 8 large chains and 8 small chains; disulfide-linked. The disulfide link is formed within the large subunit homodimers. It depends on Mg(2+) as a cofactor. Post-translationally, the disulfide bond which can form in the large chain dimeric partners within the hexadecamer appears to be associated with oxidative stress and protein turnover.

The protein localises to the plastid. The protein resides in the chloroplast. It catalyses the reaction 2 (2R)-3-phosphoglycerate + 2 H(+) = D-ribulose 1,5-bisphosphate + CO2 + H2O. The enzyme catalyses D-ribulose 1,5-bisphosphate + O2 = 2-phosphoglycolate + (2R)-3-phosphoglycerate + 2 H(+). In terms of biological role, ruBisCO catalyzes two reactions: the carboxylation of D-ribulose 1,5-bisphosphate, the primary event in carbon dioxide fixation, as well as the oxidative fragmentation of the pentose substrate in the photorespiration process. Both reactions occur simultaneously and in competition at the same active site. This is Ribulose bisphosphate carboxylase large chain from Argyrochosma delicatula (Delicate cloak fern).